The chain runs to 726 residues: NHL repeat-containing protein 2 (726 aa).

6 NHL repeats span residues 212–254, 265–307, 335–369, 409–439, 461–505, and 518–562; these read KLYK…VWKN, NPGR…IDLE, ISSP…IWAL, FAQP…VRTV, AFGD…VDPK, and ASNM…LDLE.

As to quaternary structure, monomer.

The protein localises to the cytoplasm. Its subcellular location is the cytosol. In terms of biological role, required for normal embryonic development. This Bos taurus (Bovine) protein is NHL repeat-containing protein 2 (NHLRC2).